A 128-amino-acid chain; its full sequence is Sulfurtransferase TusD (128 aa).

C78 serves as the catalytic Cysteine persulfide intermediate.

This sequence belongs to the DsrE/TusD family. Heterohexamer, formed by a dimer of trimers. The hexameric TusBCD complex contains 2 copies each of TusB, TusC and TusD. The TusBCD complex interacts with TusE.

It localises to the cytoplasm. In terms of biological role, part of a sulfur-relay system required for 2-thiolation of 5-methylaminomethyl-2-thiouridine (mnm(5)s(2)U) at tRNA wobble positions. Accepts sulfur from TusA and transfers it in turn to TusE. The polypeptide is Sulfurtransferase TusD (Escherichia coli (strain 55989 / EAEC)).